An 877-amino-acid polypeptide reads, in one-letter code: Mediator of RNA polymerase II transcription subunit 16 (877 aa).

9 WD repeats span residues 21 to 71 (WEKW…EHPW), 72 to 119 (DLHS…NSWE), 120 to 165 (SSVG…VKFS), 166 to 203 (PSLTLFGGKPMEGWIAVTVSGLVTVSLLKPSGQVLTST), 204 to 257 (ESLC…RIDT), 258 to 334 (EILP…DKQP), 335 to 415 (TILK…RPVD), 416 to 460 (EPAM…LSPS), and 461 to 495 (MGHPLEVGLALRHLLFLLEYCMVTGYDWWDILLHV). The segment at 848 to 877 (PAFVQLGPQSTHHSPRTPRSLDHLHPEDRP) is disordered. Basic and acidic residues predominate over residues 866-877 (RSLDHLHPEDRP).

This sequence belongs to the Mediator complex subunit 16 family. In terms of assembly, component of the Mediator complex, which is composed of MED1, MED4, MED6, MED7, MED8, MED9, MED10, MED11, MED12, MED13, MED13L, MED14, MED15, MED16, MED17, MED18, MED19, MED20, MED21, MED22, MED23, MED24, MED25, MED26, MED27, MED29, MED30, MED31, CCNC, CDK8 and CDC2L6/CDK11. The MED12, MED13, CCNC and CDK8 subunits form a distinct module termed the CDK8 module. Mediator containing the CDK8 module is less active than Mediator lacking this module in supporting transcriptional activation. Individual preparations of the Mediator complex lacking one or more distinct subunits have been variously termed ARC, CRSP, DRIP, PC2, SMCC and TRAP.

The protein localises to the nucleus. Functionally, component of the Mediator complex, a coactivator involved in the regulated transcription of nearly all RNA polymerase II-dependent genes. Mediator functions as a bridge to convey information from gene-specific regulatory proteins to the basal RNA polymerase II transcription machinery. Mediator is recruited to promoters by direct interactions with regulatory proteins and serves as a scaffold for the assembly of a functional preinitiation complex with RNA polymerase II and the general transcription factors. This is Mediator of RNA polymerase II transcription subunit 16 (MED16) from Homo sapiens (Human).